The following is a 141-amino-acid chain: Hemoglobin subunit alpha (141 aa).

The Globin domain maps to 1 to 141; sequence VLSPADKSNV…VSTVLTSKYR (141 aa). Ser-3 carries the post-translational modification Phosphoserine. Lys-7 and Lys-11 each carry N6-succinyllysine. Lys-16 carries the post-translational modification N6-acetyllysine; alternate. Residue Lys-16 is modified to N6-succinyllysine; alternate. Tyr-24 carries the phosphotyrosine modification. Ser-35 is modified (phosphoserine). Lys-40 carries the N6-succinyllysine modification. A Phosphoserine modification is found at Ser-49. His-58 is an O2 binding site. His-87 contributes to the heme b binding site. Phosphoserine is present on Ser-102. Position 108 is a phosphothreonine (Thr-108). Residues Ser-124 and Ser-131 each carry the phosphoserine modification. 2 positions are modified to phosphothreonine: Thr-134 and Thr-137. Residue Ser-138 is modified to Phosphoserine.

It belongs to the globin family. Heterotetramer of two alpha chains and two beta chains. In terms of tissue distribution, red blood cells.

Involved in oxygen transport from the lung to the various peripheral tissues. Functionally, hemopressin acts as an antagonist peptide of the cannabinoid receptor CNR1. Hemopressin-binding efficiently blocks cannabinoid receptor CNR1 and subsequent signaling. The chain is Hemoglobin subunit alpha (HBA) from Mico argentatus (Silvery marmoset).